The primary structure comprises 272 residues: uncharacterized protein (272 aa).

Its subcellular location is the periplasm. May be involved in ulvan degradation. Ulvan is the main polysaccharide component of the Ulvales (green seaweed) cell wall. It is composed of disaccharide building blocks comprising 3-sulfated rhamnose (Rha3S) linked to D-glucuronic acid (GlcA), L-iduronic acid (IduA), or D-xylose (Xyl). This is an uncharacterized protein from Formosa agariphila (strain DSM 15362 / KCTC 12365 / LMG 23005 / KMM 3901 / M-2Alg 35-1).